The sequence spans 562 residues: Probable malate:quinone oxidoreductase (562 aa).

The disordered stretch occupies residues 530 to 562 (EVPDKSATPPDPTIAPKHQHSPTHNANSEMQAL). Residues 551–562 (PTHNANSEMQAL) are compositionally biased toward polar residues.

Belongs to the MQO family. FAD is required as a cofactor.

The enzyme catalyses (S)-malate + a quinone = a quinol + oxaloacetate. It participates in carbohydrate metabolism; tricarboxylic acid cycle; oxaloacetate from (S)-malate (quinone route): step 1/1. The chain is Probable malate:quinone oxidoreductase from Xylella fastidiosa (strain 9a5c).